A 3095-amino-acid polypeptide reads, in one-letter code: Centrosome-associated protein 350 (3095 aa).

Disordered stretches follow at residues 1–24 (MRSSKSKEVPLPNPRNSQSKETIQ) and 63–105 (TKKS…RSPL). Polar residues predominate over residues 14–24 (PRNSQSKETIQ). Residues serine 84 and serine 140 each carry the phosphoserine modification. Disordered regions lie at residues 219–239 (DEMPNRTKGSENNSKPSLNNM), 251–272 (SDSSPSSSACNSQRSDISKRQQ), and 430–493 (KILG…RAWS). The segment covering 228–238 (SENNSKPSLNN) has biased composition (polar residues). Residues 251-265 (SDSSPSSSACNSQRS) show a composition bias toward low complexity. 2 stretches are compositionally biased toward basic and acidic residues: residues 438 to 457 (MEQKERRPTSNDRSGRERVA) and 464 to 476 (GRAESDPKLDVSH). The residue at position 468 (serine 468) is a Phosphoserine. A compositionally biased stretch (low complexity) spans 481-491 (RSSARSRSSRA). Serine 503 is modified (phosphoserine). Disordered regions lie at residues 538–623 (QAVR…QKNK) and 671–718 (ARQH…PPQP). Basic and acidic residues-rich tracts occupy residues 587 to 623 (YDTDEVRQYIVRQQEERRRRQHEEKKAQKEATEQKNK) and 690 to 699 (ESDKENKIQE). Residues 596 to 641 (IVRQQEERRRRQHEEKKAQKEATEQKNKRLQELYRRQREAFSKAKT) adopt a coiled-coil conformation. Serine 691 bears the Phosphoserine mark. Positions 701–714 (PPSASSSSDLSLSE) are enriched in low complexity. Phosphoserine is present on residues serine 874 and serine 935. A disordered region spans residues 977–996 (SVSEGPLLSEGSLSEEEERR). A compositionally biased stretch (low complexity) spans 979–988 (SEGPLLSEGS). Serine 1057 bears the Phosphoserine mark. Disordered regions lie at residues 1099–1128 (YEDDFVSSPGSGTLTERKSTLESQVDGSSL) and 1151–1265 (QHSS…SQKL). Positions 1119–1128 (LESQVDGSSL) are enriched in polar residues. Residues 1153–1168 (SSGARSAGSTRSSSAS) show a composition bias toward low complexity. Residues 1194–1206 (DEEKVQSDSERGS) show a composition bias toward basic and acidic residues. Serine 1200 is modified (phosphoserine). Positions 1251–1265 (QKTPTSPLSPSSQKL) are enriched in low complexity. Residue threonine 1253 is modified to Phosphothreonine. 2 positions are modified to phosphoserine: serine 1256 and serine 1259. Residues 1363-1402 (IKAQQQRHERDLALLKLKAEQEALECQRQLEETRNKTAQV) adopt a coiled-coil conformation. 4 disordered regions span residues 1490-1668 (AETD…GQDS), 1720-1739 (LRDKGEDDKMPPLRKKQRGL), 1787-1864 (KLKS…QRRQ), and 1893-2017 (AWDK…PVKS). A compositionally biased stretch (basic and acidic residues) spans 1503–1513 (QSKEGAVDSKR). 2 stretches are compositionally biased toward low complexity: residues 1517–1526 (SPSRDSYSES) and 1536–1545 (SSGSSRQDSP). The segment covering 1551–1564 (KENEKPFHGEKMES) has biased composition (basic and acidic residues). Phosphoserine is present on serine 1606. Residues 1624–1640 (ESHRRFNMEKKRGHHDD) are compositionally biased toward basic and acidic residues. A phosphoserine mark is found at serine 1641 and serine 1646. A coiled-coil region spans residues 1700 to 1793 (KALKEKTKAE…LQEKLKSAGE (94 aa)). Positions 1787 to 1796 (KLKSAGEKKL) are enriched in basic and acidic residues. Serine 1812 is subject to Phosphoserine. Over residues 1819 to 1835 (ETRSPSPISISSSETSS) the composition is skewed to low complexity. Composition is skewed to basic and acidic residues over residues 1845–1864 (SRMDEKFLTKREQKLMQRRQ) and 1894–1915 (WDKELVKPRTPKKEQESQRTEQ). Residues 1850-1893 (KFLTKREQKLMQRRQHAEELLEWKRRLDAEEAEIQQMEKQALAA) adopt a coiled-coil conformation. Position 1930 is a phosphoserine (serine 1930). A compositionally biased stretch (low complexity) spans 1980–1994 (STSPSKHSPPKSCLS). Residues 1999-2011 (ESSKASHRTEGHC) are compositionally biased toward basic and acidic residues. Residues 2043–2092 (IEGRIRALKDELRKRKSVVEQLKREQRKRQKERLKAQEASLLRQLETYDE) are a coiled coil. Residue serine 2108 is modified to Phosphoserine. 4 disordered regions span residues 2116-2155 (KTLSSVSEKPKIKPHPLHRSETAKTWKSVTESERSRGSLA), 2191-2265 (IEHL…VEDA), 2286-2427 (LSSK…EISE), and 2440-2471 (VHSERLLELRSPTELMKSKERSDVGHEQGGTE). Residues 2133–2151 (HRSETAKTWKSVTESERSR) are compositionally biased toward basic and acidic residues. Serine 2198 is subject to Phosphoserine. 2 stretches are compositionally biased toward basic and acidic residues: residues 2202–2214 (SSRKAQTESRDSL) and 2227–2259 (NAPDRIYDVSEAKAEDTSQKSEIQEIESMKLES). Residues 2286-2300 (LSSKELPSDSANVQQ) show a composition bias toward polar residues. The segment covering 2301–2331 (DLDKPATETSHEKEEALKEDQSNHSTDDRSP) has biased composition (basic and acidic residues). A compositionally biased stretch (polar residues) spans 2349–2362 (DSTCSGQLSVPKES). 2 stretches are compositionally biased toward basic and acidic residues: residues 2377-2387 (ISADEISKDDS) and 2395-2407 (LRKDSQSHRDRSQ). Low complexity predominate over residues 2409–2420 (TRSSRSRATGSG). Phosphoserine is present on residues serine 2421 and serine 2450. Over residues 2455–2465 (MKSKERSDVGH) the composition is skewed to basic and acidic residues. Positions 2504-2546 (GETDFAKGFWAGVELDKPEGNNNGTYDGIVYFVCKDKHGIFAP) constitute a CAP-Gly domain. Threonine 2671 is modified (phosphothreonine). The stretch at 2700-2731 (LLDLLTREKNQLEAQLKSSISEEKKSKQQLET) forms a coiled coil. A disordered region spans residues 2767–2793 (QEFLDQKKVPPQDLPQNTEEQSPSVPS). Residues 2780–2791 (LPQNTEEQSPSV) show a composition bias toward polar residues. Phosphoserine is present on residues serine 2809 and serine 2818.

Part of a ternary complex that contains CEP350, CEP43 and MAPRE1. Interacts (via C-terminus) directly with CEP43 (via N-terminus). Interacts with NR1H3, PPARA, PPARD and PPARG. Interacts directly with microtubules. Interacts with the fusion protein CEP43-FGFR1, and by doing so recruits and activates PI3K and PLC-gamma. Interacts with CYLD. Interacts with CFAP157. Interacts with CEP19 (via C-terminus). Interacts with CEP78; promoting CEP78 localization to centrosome and centriole. Post-translationally, phosphorylated during mitosis.

The protein resides in the cytoplasm. It is found in the cytoskeleton. The protein localises to the microtubule organizing center. Its subcellular location is the centrosome. It localises to the spindle. The protein resides in the nucleus. It is found in the centriole. The protein localises to the cilium basal body. In terms of biological role, plays an essential role in centriole growth by stabilizing a procentriolar seed composed of at least, SASS6 and CPAP. Required for anchoring microtubules to the centrosomes and for the integrity of the microtubule network. Recruits PPARA to discrete subcellular compartments and thereby modulates PPARA activity. Required for ciliation. The protein is Centrosome-associated protein 350 of Mus musculus (Mouse).